The sequence spans 173 residues: NADH-ubiquinone oxidoreductase chain 6 (173 aa).

A run of 5 helical transmembrane segments spans residues methionine 1–serine 21, tyrosine 27–glycine 47, alanine 48–valine 68, valine 87–phenylalanine 107, and tryptophan 139–leucine 159.

This sequence belongs to the complex I subunit 6 family.

The protein localises to the mitochondrion membrane. It catalyses the reaction a ubiquinone + NADH + 5 H(+)(in) = a ubiquinol + NAD(+) + 4 H(+)(out). Functionally, core subunit of the mitochondrial membrane respiratory chain NADH dehydrogenase (Complex I) that is believed to belong to the minimal assembly required for catalysis. Complex I functions in the transfer of electrons from NADH to the respiratory chain. The immediate electron acceptor for the enzyme is believed to be ubiquinone. This chain is NADH-ubiquinone oxidoreductase chain 6 (MT-ND6), found in Brachyramphus marmoratus (Marbled murrelet).